We begin with the raw amino-acid sequence, 350 residues long: Hepatocyte nuclear factor 3-gamma (350 aa).

The segment at residues 116-207 (AKPPYSYISL…GNMFENGCYL (92 aa)) is a DNA-binding region (fork-head). The segment at 217–276 (EKVKKGGSGAATTTRNGTGSAASTTTPAATVTSPPQPPPPAPEPEAQGGEDVGALDCGSP) is disordered. The span at 226–249 (AATTTRNGTGSAASTTTPAATVTS) shows a compositional bias: low complexity. Positions 250–259 (PPQPPPPAPE) are enriched in pro residues.

Interacts with FOXA2. Expressed in erythroleukemia and hepatoma cell lines and in liver and pancreas. Not expressed in any other cell lines or tissues examined.

It localises to the nucleus. Functionally, transcription factor that is thought to act as a 'pioneer' factor opening the compacted chromatin for other proteins through interactions with nucleosomal core histones and thereby replacing linker histones at target enhancer and/or promoter sites. Originally described as a transcription activator for a number of liver genes such as AFP, albumin, tyrosine aminotransferase, PEPCK, etc. Interacts with the cis-acting regulatory regions of these genes. Involved in glucose homeostasis; binds to and activates transcription from the G6PC1 promoter. Binds to the CYP3A4 promoter and activates its transcription in cooperation with CEBPA. Binds to the CYP3A7 promoter together with members of the CTF/NF-I family. Involved in regulation of neuronal-specific transcription. May be involved in regulation of spermatogenesis. This Homo sapiens (Human) protein is Hepatocyte nuclear factor 3-gamma (FOXA3).